We begin with the raw amino-acid sequence, 75 residues long: Acyl carrier protein (75 aa).

Positions 1 to 75 (MIFEKVRDII…DVVEYLSNLE (75 aa)) constitute a Carrier domain. Position 35 is an O-(pantetheine 4'-phosphoryl)serine (Ser35).

The protein belongs to the acyl carrier protein (ACP) family. Post-translationally, 4'-phosphopantetheine is transferred from CoA to a specific serine of apo-ACP by AcpS. This modification is essential for activity because fatty acids are bound in thioester linkage to the sulfhydryl of the prosthetic group.

It is found in the cytoplasm. Its pathway is lipid metabolism; fatty acid biosynthesis. Carrier of the growing fatty acid chain in fatty acid biosynthesis. The polypeptide is Acyl carrier protein (Thermoanaerobacter pseudethanolicus (strain ATCC 33223 / 39E) (Clostridium thermohydrosulfuricum)).